The sequence spans 220 residues: Histone deacetylase complex subunit SAP30 (220 aa).

Positions 1 to 129 (MNGFTPEEMS…QSVRNRRKRK (129 aa)) are interaction with NCOR1. Phosphothreonine is present on Thr-5. An Atypical zinc finger spans residues 67-115 (CCLREDGERCGRAAGNASFSKRIQKSISQKKVKIELDKSARHLYICDYH). Residue Lys-87 forms a Glycyl lysine isopeptide (Lys-Gly) (interchain with G-Cter in SUMO2) linkage. The tract at residues 123 to 143 (RNRRKRKGSDDDGGDSPVQDI) is disordered. The interaction with SIN3A stretch occupies residues 130 to 220 (GSDDDGGDSP…SDLKADSGVH (91 aa)). Ser-131 and Ser-138 each carry phosphoserine. Thr-145 carries the phosphothreonine modification. Residues Lys-194 and Lys-214 each participate in a glycyl lysine isopeptide (Lys-Gly) (interchain with G-Cter in SUMO2) cross-link.

Belongs to the SAP30 family. As to quaternary structure, component of the histone deacetylase complex that includes at least SIN3A, HDAC1 and HDAC2. Found in a complex composed of at least SINHCAF, SIN3A, HDAC1, SAP30, RBBP4, OGT and TET1. Interacts with HDAC1. Interacts with SIN3A, SIN3B, HDAC2, RBBP4 and NCOR1. Interacts directly with SAMSN1. Interacts with HCFC1. Interacts with SAP30BP.

The protein resides in the nucleus. In terms of biological role, involved in the functional recruitment of the Sin3-histone deacetylase complex (HDAC) to a specific subset of N-CoR corepressor complexes. Capable of transcription repression by N-CoR. Active in deacetylating core histone octamers (when in a complex) but inactive in deacetylating nucleosomal histones. The chain is Histone deacetylase complex subunit SAP30 from Mus musculus (Mouse).